Here is a 432-residue protein sequence, read N- to C-terminus: Meiotically up-regulated gene 134 protein (432 aa).

Belongs to the UPF0300 family.

The protein resides in the cytoplasm. The protein localises to the cell cortex. Its function is as follows. Has a role in meiosis. The sequence is that of Meiotically up-regulated gene 134 protein (mug134) from Schizosaccharomyces pombe (strain 972 / ATCC 24843) (Fission yeast).